The chain runs to 758 residues: Putative transcriptional regulatory protein YJL206C (758 aa).

A DNA-binding region (zn(2)-C6 fungal-type) is located at residues 47–73 (CIACRKRKVRCSGNIPCRLCQTNSYEC).

The protein belongs to the ASG1 family.

It localises to the nucleus. This Saccharomyces cerevisiae (strain ATCC 204508 / S288c) (Baker's yeast) protein is Putative transcriptional regulatory protein YJL206C.